A 357-amino-acid polypeptide reads, in one-letter code: Protein pelota homolog (357 aa).

This sequence belongs to the eukaryotic release factor 1 family. Pelota subfamily. As to quaternary structure, monomer. The cofactor is a divalent metal cation.

It is found in the cytoplasm. Its function is as follows. May function in recognizing stalled ribosomes, interact with stem-loop structures in stalled mRNA molecules, and effect endonucleolytic cleavage of the mRNA. May play a role in the release non-functional ribosomes and degradation of damaged mRNAs. Has endoribonuclease activity. This is Protein pelota homolog from Methanocella arvoryzae (strain DSM 22066 / NBRC 105507 / MRE50).